The chain runs to 102 residues: Inner membrane protein YaiY (102 aa).

Topologically, residues 1 to 24 are cytoplasmic; sequence MADFTLSKSLFSGKYRNASSTPGN. The chain crosses the membrane as a helical span at residues 25 to 45; it reads IAYALFVLFCFWAGAQLLNLL. Residues 46 to 74 lie on the Periplasmic side of the membrane; it reads VHAPGVYERLMQVQETGRPRVEIGLGVGT. Residues 75 to 95 form a helical membrane-spanning segment; it reads IFGLIPFLVGCLIFAVVALWL. Residues 96–102 lie on the Cytoplasmic side of the membrane; that stretch reads HWRHRRQ.

The protein localises to the cell inner membrane. This chain is Inner membrane protein YaiY (yaiY), found in Escherichia coli O157:H7.